The sequence spans 239 residues: Ribose-5-phosphate isomerase A (239 aa).

Residues S30–T33, D87–D90, and K100–G103 contribute to the substrate site. The active-site Proton acceptor is the E109. Residue K127 coordinates substrate.

Belongs to the ribose 5-phosphate isomerase family. In terms of assembly, homodimer.

It carries out the reaction aldehydo-D-ribose 5-phosphate = D-ribulose 5-phosphate. It functions in the pathway carbohydrate degradation; pentose phosphate pathway; D-ribose 5-phosphate from D-ribulose 5-phosphate (non-oxidative stage): step 1/1. In terms of biological role, catalyzes the reversible conversion of ribose-5-phosphate to ribulose 5-phosphate. This Synechococcus sp. (strain CC9605) protein is Ribose-5-phosphate isomerase A.